The sequence spans 196 residues: MENHKSNNTKENITIVDISRKINQLPEAERNLLEHGSVYVGLNAALCGLIANSLFRRILNVTKARIAAGLPMAWIPFLTTDITYRCFVSFPLNTGDLDCETCTITRSGLIGLVIGGLYPVFLAIPVNGGLAARYQSALLPHKGNILSYWIRTSKPVFRKMLFPIMLQTMFSAYLGSEQYKLLIKALQLSEPGKEIH.

Residues 1-34 are Mitochondrial matrix-facing; sequence MENHKSNNTKENITIVDISRKINQLPEAERNLLE. A helical transmembrane segment spans residues 35–55; the sequence is HGSVYVGLNAALCGLIANSLF. Topologically, residues 56-57 are mitochondrial intermembrane; sequence RR. The helical transmembrane segment at 58 to 78 threads the bilayer; sequence ILNVTKARIAAGLPMAWIPFL. Topologically, residues 79-107 are mitochondrial matrix; sequence TTDITYRCFVSFPLNTGDLDCETCTITRS. A helical transmembrane segment spans residues 108 to 128; the sequence is GLIGLVIGGLYPVFLAIPVNG. The Mitochondrial intermembrane segment spans residues 129–159; it reads GLAARYQSALLPHKGNILSYWIRTSKPVFRK. Residues 160-176 traverse the membrane as a helical segment; it reads MLFPIMLQTMFSAYLGS. The Mitochondrial matrix portion of the chain corresponds to 177–196; the sequence is EQYKLLIKALQLSEPGKEIH.

The protein belongs to the TMEM126 family. Interacts with OXA1L; promoting cotranslational quality control in mitochondria.

The protein resides in the mitochondrion inner membrane. Its function is as follows. Protein required for the cotranslational protein quality control in the inner membrane of the mitochondria. Associates with newly synthesized polypeptides and may act as a chaperone that cooperates with OXA1L for the insertion of newly synthesized mitochondrial proteins into the inner membrane. Required for the assembly of the ND4 module of mitochondrial complex I. In Pongo abelii (Sumatran orangutan), this protein is Transmembrane protein 126A (TMEM126A).